The chain runs to 1365 residues: Nuclear pore complex protein Nup154 (1365 aa).

The required for binding to Nup93-1 and anchoring to the nuclear pore complex stretch occupies residues 1-508 (MTLPQAQLDF…GTHIIEVLKM (508 aa)). The tract at residues 508–986 (MVDVLRQILL…KSINPLKGTA (479 aa)) is required for binding to chromatin.

Belongs to the non-repetitive/WGA-negative nucleoporin family. As to quaternary structure, interacts (via N-terminus) with Nup93-1. Interacts with Nup35. Interacts with cup.

Its subcellular location is the nucleus. It localises to the nuclear pore complex. The protein localises to the chromosome. It is found in the nucleus membrane. The protein resides in the cytoplasm. In terms of biological role, component of the nuclear pore complex. Has a role in the organization of the inner nuclear membrane proteins at the nuclear envelope. In germ cells, plays a role in the nuclear localization of components of the dpp signaling pathways, such as Medea and phosphorylated Mad. Binds to chromatin, and together with Nup62 and Nup93-1, contributes to karyosome morphology and chromatin organization including attachment to the nuclear envelope in oocytes and nurse cells. Has a role in female fertility including egg chamber development; in nurse cells, has a role in the organization of F-actin in subcortical and cytoplasmic actin filaments important for the transfer of cytoplasm from nurse cells to the growing oocytes. Has a role in male spermatogenesis and fertility. Has a role in germ line cell proliferation. This Drosophila melanogaster (Fruit fly) protein is Nuclear pore complex protein Nup154.